Reading from the N-terminus, the 328-residue chain is 3-dehydroquinate synthase (328 aa).

This sequence belongs to the archaeal-type DHQ synthase family.

The catalysed reaction is 2-amino-2,3,7-trideoxy-D-lyxo-hept-6-ulosonate + NAD(+) + H2O = 3-dehydroquinate + NH4(+) + NADH + H(+). Catalyzes the oxidative deamination and cyclization of 2-amino-3,7-dideoxy-D-threo-hept-6-ulosonic acid (ADH) to yield 3-dehydroquinate (DHQ), which is fed into the canonical shikimic pathway of aromatic amino acid biosynthesis. This Methanoculleus marisnigri (strain ATCC 35101 / DSM 1498 / JR1) protein is 3-dehydroquinate synthase.